Reading from the N-terminus, the 378-residue chain is CST complex subunit STN1 (378 aa).

The interval 8 to 195 (MECESSPREE…KVYDQPFRNP (188 aa)) is interaction with CTC1. A DNA-binding region (OB) is located at residues 64–165 (VDIMGAVISV…EICANIYYKV (102 aa)). Winged helix-turn-helix (wHTH) stretches follow at residues 201 to 305 (EALN…YVTT) and 306 to 378 (KDKD…YAAF).

Belongs to the STN1 family. Component of the CST complex, composed of TEN1/C17orf106, CTC1/C17orf68 and STN1; in the complex interacts directly with TEN1 and CTC1. Interacts with ACD/TPP1. Interacts with POT1 and POLA1.

Its subcellular location is the nucleus. The protein resides in the chromosome. The protein localises to the telomere. Functionally, component of the CST complex proposed to act as a specialized replication factor promoting DNA replication under conditions of replication stress or natural replication barriers such as the telomere duplex. The CST complex binds single-stranded DNA with high affinity in a sequence-independent manner, while isolated subunits bind DNA with low affinity by themselves. Initially the CST complex has been proposed to protect telomeres from DNA degradation. However, the CST complex has been shown to be involved in several aspects of telomere replication. The CST complex inhibits telomerase and is involved in telomere length homeostasis; it is proposed to bind to newly telomerase-synthesized 3' overhangs and to terminate telomerase action implicating the association with the ACD:POT1 complex thus interfering with its telomerase stimulation activity. The CST complex is also proposed to be involved in fill-in synthesis of the telomeric C-strand probably implicating recruitment and activation of DNA polymerase alpha. The CST complex facilitates recovery from many forms of exogenous DNA damage; seems to be involved in the re-initiation of DNA replication at repaired forks and/or dormant origins. Required for efficicient replication of the duplex region of the telomere. Promotes efficient replication of lagging-strand telomeres. Promotes general replication start following replication-fork stalling implicating new origin firing. May be in involved in C-strand fill-in during late S/G2 phase independent of its role in telomere duplex replication. This chain is CST complex subunit STN1, found in Mus musculus (Mouse).